Reading from the N-terminus, the 360-residue chain is MLVWLAEHLVQFYSGFNVFSYLTFRAIVSLLTALFLSLWMGPRLIAWLQKLQIAQVVRNDGPESHFSKRGTPTMGGLMILTSITISVLMWAYPSNPYVWCVLFVLVGYGIVGFIDDYRKVVRKDTKGLIVRWKYFWQSVIALAVAFTMFAVGKDTPATQLAVPFFKDIMPQLGLWYVLLAYFVIVGTSNAVNLTDGLDGLAIMPTVFVAAGLALVAWATGNMNFAGYLHIPYVRFAGELVVVCTAIVGAGLGFLWFNTYPAQVFMGDVGSLALGGALGTIAVLLRQEFLLLIMGGVFVVETLSVILQVGSFKLRGQRIFRMAPIHHHYELKGWPEPRVIVRFWIISLMLVLIGLATLKVR.

The next 10 membrane-spanning stretches (helical) occupy residues 27–47 (IVSL…LIAW), 72–92 (PTMG…MWAY), 94–114 (SNPY…VGFI), 132–152 (WKYF…FAVG), 168–188 (IMPQ…VGTS), 199–219 (GLAI…AWAT), 235–255 (FAGE…GFLW), 263–283 (VFMG…IAVL), 288–308 (FLLL…ILQV), and 338–358 (VIVR…ATLK).

The protein belongs to the glycosyltransferase 4 family. MraY subfamily. Requires Mg(2+) as cofactor.

The protein localises to the cell inner membrane. The catalysed reaction is UDP-N-acetyl-alpha-D-muramoyl-L-alanyl-gamma-D-glutamyl-meso-2,6-diaminopimeloyl-D-alanyl-D-alanine + di-trans,octa-cis-undecaprenyl phosphate = di-trans,octa-cis-undecaprenyl diphospho-N-acetyl-alpha-D-muramoyl-L-alanyl-D-glutamyl-meso-2,6-diaminopimeloyl-D-alanyl-D-alanine + UMP. It participates in cell wall biogenesis; peptidoglycan biosynthesis. In terms of biological role, catalyzes the initial step of the lipid cycle reactions in the biosynthesis of the cell wall peptidoglycan: transfers peptidoglycan precursor phospho-MurNAc-pentapeptide from UDP-MurNAc-pentapeptide onto the lipid carrier undecaprenyl phosphate, yielding undecaprenyl-pyrophosphoryl-MurNAc-pentapeptide, known as lipid I. In Sodalis glossinidius (strain morsitans), this protein is Phospho-N-acetylmuramoyl-pentapeptide-transferase.